A 63-amino-acid chain; its full sequence is Acrosin inhibitor 1 (63 aa).

The Kazal-like domain occupies 8-63 (FGFPPDCKVYTEACTREYNPICDSAAKTYSNECTFCNEKMNNDADIHFNHFGECEY). Intrachain disulfides connect cysteine 14–cysteine 43, cysteine 21–cysteine 40, and cysteine 29–cysteine 61.

As to expression, seminal plasma.

It is found in the secreted. Strong inhibitor of acrosin. This chain is Acrosin inhibitor 1, found in Bos taurus (Bovine).